The sequence spans 592 residues: MRLPTTLLLFIGALIFSGAGTVRSDASDHRYKDGDSVPLYANKVGPFHNPSETYRYFDLPFCIPEGVKDKKEALGEVLNGDRLVSAPYKLNFRDEKDSEVYCKKKLSREEVEHFRRAVEKDYYFQMYYDDLPIWGFIGKVDKESKSDPSEFKYFLYKHIQFEILYNKDRVIEINARMDPHSLVDLTEDKEVDAEFMYTVKWKETETSFEKRMDKYAMSSSLPHHLEIHWFSIINSCVTVLLLTGFLATILMRVLKNDFMKYAQDEEAADDQEETGWKYIHGDVFRFPKNKSLFAASLGSGTQLFTLTIFIFMLSLVGVFYPYNRGALFTALVVIYALTSGIAGYTASSFYCQLEGKNWVRNLLLTGGLFCGPLFLTFCFLNTVAIAYSATAALPFGTIIVIVLIWTLVTSPLLVLGGIAGKNSKAEFQAPVRTTKYPREIPPLPWYRSAVPQMAMAGFLPFSAIYIELYYIFASVWGHRIYTIYSILFIVFIILLIVTAFITVALTYFQLAAEDHEWWWRSFLCGGSTGLFIYAYCLYYYYARSDMSGFMQTSFFFGYMACICYGFFLMLGTVGFRAALLFVRHIYRSIKCE.

An N-terminal signal peptide occupies residues 1-19; that stretch reads MRLPTTLLLFIGALIFSGA. Over 20–229 the chain is Lumenal; that stretch reads GTVRSDASDH…SLPHHLEIHW (210 aa). The helical transmembrane segment at 230–250 threads the bilayer; that stretch reads FSIINSCVTVLLLTGFLATIL. Over 251–302 the chain is Cytoplasmic; sequence MRVLKNDFMKYAQDEEAADDQEETGWKYIHGDVFRFPKNKSLFAASLGSGTQ. A helical membrane pass occupies residues 303–323; sequence LFTLTIFIFMLSLVGVFYPYN. The Lumenal portion of the chain corresponds to 324–325; sequence RG. A helical membrane pass occupies residues 326-346; that stretch reads ALFTALVVIYALTSGIAGYTA. At 347–365 the chain is on the cytoplasmic side; sequence SSFYCQLEGKNWVRNLLLT. A helical transmembrane segment spans residues 366 to 386; sequence GGLFCGPLFLTFCFLNTVAIA. At 387–397 the chain is on the lumenal side; it reads YSATAALPFGT. A helical membrane pass occupies residues 398 to 418; that stretch reads IIVIVLIWTLVTSPLLVLGGI. Residues 419 to 452 are Cytoplasmic-facing; it reads AGKNSKAEFQAPVRTTKYPREIPPLPWYRSAVPQ. The chain crosses the membrane as a helical span at residues 453–473; it reads MAMAGFLPFSAIYIELYYIFA. The Lumenal portion of the chain corresponds to 474-485; that stretch reads SVWGHRIYTIYS. A helical membrane pass occupies residues 486-506; that stretch reads ILFIVFIILLIVTAFITVALT. The Cytoplasmic segment spans residues 507-521; the sequence is YFQLAAEDHEWWWRS. A helical membrane pass occupies residues 522–542; that stretch reads FLCGGSTGLFIYAYCLYYYYA. The Lumenal segment spans residues 543 to 553; sequence RSDMSGFMQTS. The helical transmembrane segment at 554 to 574 threads the bilayer; sequence FFFGYMACICYGFFLMLGTVG. The Cytoplasmic segment spans residues 575 to 592; that stretch reads FRAALLFVRHIYRSIKCE. An Endoplasmic reticulum export signal motif is present at residues 581–586; it reads FVRHIY. Positions 590-592 match the Golgi retention signal motif; it reads KCE.

This sequence belongs to the nonaspanin (TM9SF) (TC 9.A.2) family.

The protein localises to the endosome membrane. The protein resides in the golgi apparatus membrane. The sequence is that of Transmembrane 9 superfamily member 3 from Arabidopsis thaliana (Mouse-ear cress).